The chain runs to 437 residues: Trigger factor (437 aa).

In terms of domain architecture, PPIase FKBP-type spans 164-249; the sequence is GDRVTIDFAG…LKSVEAPKLP (86 aa).

It belongs to the FKBP-type PPIase family. Tig subfamily.

Its subcellular location is the cytoplasm. It catalyses the reaction [protein]-peptidylproline (omega=180) = [protein]-peptidylproline (omega=0). Its function is as follows. Involved in protein export. Acts as a chaperone by maintaining the newly synthesized protein in an open conformation. Functions as a peptidyl-prolyl cis-trans isomerase. This chain is Trigger factor, found in Azoarcus sp. (strain BH72).